A 115-amino-acid polypeptide reads, in one-letter code: Large ribosomal subunit protein bL19 (115 aa).

It belongs to the bacterial ribosomal protein bL19 family.

In terms of biological role, this protein is located at the 30S-50S ribosomal subunit interface and may play a role in the structure and function of the aminoacyl-tRNA binding site. The polypeptide is Large ribosomal subunit protein bL19 (Alkaliphilus oremlandii (strain OhILAs) (Clostridium oremlandii (strain OhILAs))).